Consider the following 426-residue polypeptide: UDP-N-acetylglucosamine--N-acetylmuramyl-(pentapeptide) pyrophosphoryl-undecaprenol N-acetylglucosamine transferase (426 aa).

UDP-N-acetyl-alpha-D-glucosamine contacts are provided by residues Thr-28–Gly-30, Asn-140, Arg-176, Ser-204, Ile-257, and Gln-302. The disordered stretch occupies residues Ala-369–Arg-388.

This sequence belongs to the glycosyltransferase 28 family. MurG subfamily.

The protein localises to the cell inner membrane. It carries out the reaction di-trans,octa-cis-undecaprenyl diphospho-N-acetyl-alpha-D-muramoyl-L-alanyl-D-glutamyl-meso-2,6-diaminopimeloyl-D-alanyl-D-alanine + UDP-N-acetyl-alpha-D-glucosamine = di-trans,octa-cis-undecaprenyl diphospho-[N-acetyl-alpha-D-glucosaminyl-(1-&gt;4)]-N-acetyl-alpha-D-muramoyl-L-alanyl-D-glutamyl-meso-2,6-diaminopimeloyl-D-alanyl-D-alanine + UDP + H(+). Its pathway is cell wall biogenesis; peptidoglycan biosynthesis. In terms of biological role, cell wall formation. Catalyzes the transfer of a GlcNAc subunit on undecaprenyl-pyrophosphoryl-MurNAc-pentapeptide (lipid intermediate I) to form undecaprenyl-pyrophosphoryl-MurNAc-(pentapeptide)GlcNAc (lipid intermediate II). In Xanthomonas axonopodis pv. citri (strain 306), this protein is UDP-N-acetylglucosamine--N-acetylmuramyl-(pentapeptide) pyrophosphoryl-undecaprenol N-acetylglucosamine transferase.